The following is a 310-amino-acid chain: Tagatose-6-phosphate kinase (310 aa).

Belongs to the carbohydrate kinase PfkB family. LacC subfamily.

It carries out the reaction D-tagatofuranose 6-phosphate + ATP = D-tagatofuranose 1,6-bisphosphate + ADP + H(+). Its pathway is carbohydrate metabolism; D-tagatose 6-phosphate degradation; D-glyceraldehyde 3-phosphate and glycerone phosphate from D-tagatose 6-phosphate: step 1/2. The chain is Tagatose-6-phosphate kinase from Staphylococcus aureus (strain bovine RF122 / ET3-1).